A 66-amino-acid polypeptide reads, in one-letter code: Small ribosomal subunit protein bS21 (66 aa).

The protein belongs to the bacterial ribosomal protein bS21 family.

The polypeptide is Small ribosomal subunit protein bS21 (Rickettsia africae (strain ESF-5)).